Here is a 160-residue protein sequence, read N- to C-terminus: 6,7-dimethyl-8-ribityllumazine synthase (160 aa).

Residues Trp-26, Ala-58–Glu-60, and Val-80–Ile-82 each bind 5-amino-6-(D-ribitylamino)uracil. Glu-85 to Thr-86 serves as a coordination point for (2S)-2-hydroxy-3-oxobutyl phosphate. The Proton donor role is filled by His-88. Asn-113 contacts 5-amino-6-(D-ribitylamino)uracil. Arg-127 is a binding site for (2S)-2-hydroxy-3-oxobutyl phosphate.

It belongs to the DMRL synthase family. In terms of assembly, homopentamer.

It carries out the reaction (2S)-2-hydroxy-3-oxobutyl phosphate + 5-amino-6-(D-ribitylamino)uracil = 6,7-dimethyl-8-(1-D-ribityl)lumazine + phosphate + 2 H2O + H(+). It functions in the pathway cofactor biosynthesis; riboflavin biosynthesis; riboflavin from 2-hydroxy-3-oxobutyl phosphate and 5-amino-6-(D-ribitylamino)uracil: step 1/2. In terms of biological role, catalyzes the formation of 6,7-dimethyl-8-ribityllumazine by condensation of 5-amino-6-(D-ribitylamino)uracil with 3,4-dihydroxy-2-butanone 4-phosphate. This is the penultimate step in the biosynthesis of riboflavin. The polypeptide is 6,7-dimethyl-8-ribityllumazine synthase (Mycobacteroides abscessus (strain ATCC 19977 / DSM 44196 / CCUG 20993 / CIP 104536 / JCM 13569 / NCTC 13031 / TMC 1543 / L948) (Mycobacterium abscessus)).